Consider the following 368-residue polypeptide: uncharacterized protein (368 aa).

This is an uncharacterized protein from Rickettsia prowazekii (strain Madrid E).